Consider the following 263-residue polypeptide: 4-hydroxy-tetrahydrodipicolinate reductase (263 aa).

Residues 8–13, Asp34, 97–99, and 123–126 contribute to the NAD(+) site; these read GACGKM, GTT, and APNF. The active-site Proton donor/acceptor is His153. His154 lines the (S)-2,3,4,5-tetrahydrodipicolinate pocket. Lys157 acts as the Proton donor in catalysis. 163–164 contacts (S)-2,3,4,5-tetrahydrodipicolinate; it reads GT.

It belongs to the DapB family.

It is found in the cytoplasm. It carries out the reaction (S)-2,3,4,5-tetrahydrodipicolinate + NAD(+) + H2O = (2S,4S)-4-hydroxy-2,3,4,5-tetrahydrodipicolinate + NADH + H(+). The enzyme catalyses (S)-2,3,4,5-tetrahydrodipicolinate + NADP(+) + H2O = (2S,4S)-4-hydroxy-2,3,4,5-tetrahydrodipicolinate + NADPH + H(+). The protein operates within amino-acid biosynthesis; L-lysine biosynthesis via DAP pathway; (S)-tetrahydrodipicolinate from L-aspartate: step 4/4. Its function is as follows. Catalyzes the conversion of 4-hydroxy-tetrahydrodipicolinate (HTPA) to tetrahydrodipicolinate. The polypeptide is 4-hydroxy-tetrahydrodipicolinate reductase (Carboxydothermus hydrogenoformans (strain ATCC BAA-161 / DSM 6008 / Z-2901)).